The following is a 137-amino-acid chain: Large ribosomal subunit protein bL17 (137 aa).

Belongs to the bacterial ribosomal protein bL17 family. In terms of assembly, part of the 50S ribosomal subunit. Contacts protein L32.

This is Large ribosomal subunit protein bL17 from Caulobacter sp. (strain K31).